We begin with the raw amino-acid sequence, 421 residues long: Acetylglutamate kinase (421 aa).

Positions 1 to 252 (MASTKEISQY…PLESSVSITR (252 aa)) are acetylglutamate kinase. Residues 59–60 (AG), arginine 81, and asparagine 170 contribute to the substrate site. The 147-residue stretch at 274–420 (ERVIRATTWK…HCAQHPPTLI (147 aa)) folds into the N-acetyltransferase domain.

In the N-terminal section; belongs to the acetylglutamate kinase family. ArgB subfamily.

Its subcellular location is the cytoplasm. It carries out the reaction N-acetyl-L-glutamate + ATP = N-acetyl-L-glutamyl 5-phosphate + ADP. It participates in amino-acid biosynthesis; L-arginine biosynthesis; N(2)-acetyl-L-ornithine from L-glutamate: step 2/4. The sequence is that of Acetylglutamate kinase (argB) from Xylella fastidiosa (strain 9a5c).